The primary structure comprises 694 residues: Potassium-transporting ATPase ATP-binding subunit (694 aa).

4 consecutive transmembrane segments (helical) span residues 36–56, 62–82, 218–238, and 249–269; these read VMFV…RDLI, LAFS…ANFA, IALN…TATI, and IPII…IGAL. Catalysis depends on aspartate 306, which acts as the 4-aspartylphosphate intermediate. Residues aspartate 343, glutamate 347, 376–383, and lysine 394 contribute to the ATP site; that span reads FTAQTRMS. Mg(2+) is bound by residues aspartate 530 and aspartate 534. A run of 3 helical transmembrane segments spans residues 600–620, 628–648, and 666–686; these read FAII…LNVM, AILS…PLSL, and LVIY…LIDL.

This sequence belongs to the cation transport ATPase (P-type) (TC 3.A.3) family. Type IA subfamily. As to quaternary structure, the system is composed of three essential subunits: KdpA, KdpB and KdpC.

It is found in the cell inner membrane. It catalyses the reaction K(+)(out) + ATP + H2O = K(+)(in) + ADP + phosphate + H(+). Its function is as follows. Part of the high-affinity ATP-driven potassium transport (or Kdp) system, which catalyzes the hydrolysis of ATP coupled with the electrogenic transport of potassium into the cytoplasm. This subunit is responsible for energy coupling to the transport system and for the release of the potassium ions to the cytoplasm. In Agrobacterium fabrum (strain C58 / ATCC 33970) (Agrobacterium tumefaciens (strain C58)), this protein is Potassium-transporting ATPase ATP-binding subunit.